A 121-amino-acid chain; its full sequence is Small ribosomal subunit protein uS13 (121 aa).

Positions 92 to 121 (KRGLPVRGQRTRTNARTRKGPRRAAASLKK) are disordered.

The protein belongs to the universal ribosomal protein uS13 family. Part of the 30S ribosomal subunit. Forms a loose heterodimer with protein S19. Forms two bridges to the 50S subunit in the 70S ribosome.

In terms of biological role, located at the top of the head of the 30S subunit, it contacts several helices of the 16S rRNA. In the 70S ribosome it contacts the 23S rRNA (bridge B1a) and protein L5 of the 50S subunit (bridge B1b), connecting the 2 subunits; these bridges are implicated in subunit movement. Contacts the tRNAs in the A and P-sites. The chain is Small ribosomal subunit protein uS13 from Bordetella bronchiseptica (strain ATCC BAA-588 / NCTC 13252 / RB50) (Alcaligenes bronchisepticus).